A 1243-amino-acid chain; its full sequence is Tau-tubulin kinase 2 (1243 aa).

A Protein kinase domain is found at Trp21 to Ile284. ATP-binding positions include Ile27–Ile35 and Lys50. Asp141 functions as the Proton acceptor in the catalytic mechanism. Ser445 bears the Phosphoserine mark. The span at Val674 to Ser683 shows a compositional bias: polar residues. Disordered regions lie at residues Val674–Leu695 and Thr737–Asp761. Position 786 is a phosphoserine (Ser786). Positions Gln1063–Gly1086 are disordered. The segment covering Leu1073–Arg1084 has biased composition (pro residues). At Ser1102 the chain carries Phosphoserine. Over residues Gln1115–Ser1129 the composition is skewed to polar residues. The tract at residues Gln1115 to Arg1243 is disordered. Low complexity-rich tracts occupy residues Val1144–Ala1170, Ser1187–Ser1202, and Ser1227–Arg1243.

This sequence belongs to the protein kinase superfamily. CK1 Ser/Thr protein kinase family. As to quaternary structure, interacts with CEP164. Interacts with MCRS1; the interaction is required for recruitment of TTBK2 to the mother centriole.

It is found in the cell projection. The protein localises to the cilium. It localises to the cytoplasm. The protein resides in the cytoskeleton. Its subcellular location is the cilium basal body. It is found in the microtubule organizing center. The protein localises to the centrosome. It localises to the centriole. The protein resides in the cytosol. Its subcellular location is the nucleus. The enzyme catalyses L-seryl-[protein] + ATP = O-phospho-L-seryl-[protein] + ADP + H(+). The catalysed reaction is L-threonyl-[protein] + ATP = O-phospho-L-threonyl-[protein] + ADP + H(+). In terms of biological role, serine/threonine kinase that acts as a key regulator of ciliogenesis: controls the initiation of ciliogenesis by binding to the distal end of the basal body and promoting the removal of CCP110, which caps the mother centriole, leading to the recruitment of IFT proteins, which build the ciliary axoneme. Has some substrate preference for proteins that are already phosphorylated on a Tyr residue at the +2 position relative to the phosphorylation site. Able to phosphorylate tau on serines in vitro. Phosphorylates MPHOSPH9 which promotes its ubiquitination and proteasomal degradation, loss of MPHOSPH9 facilitates the removal of the CP110-CEP97 complex (a negative regulator of ciliogenesis) from the mother centrioles, promoting the initiation of ciliogenesis. Required for recruitment of CPLANE2 and INTU to the mother centriole. The chain is Tau-tubulin kinase 2 (Ttbk2) from Mus musculus (Mouse).